Consider the following 77-residue polypeptide: Conotoxin ArMKLT2-0251 (77 aa).

A signal peptide spans 1 to 22; the sequence is MKLTCVLIVAVLILTACQLIAA. Residues 23–46 constitute a propeptide that is removed on maturation; sequence DDSRDLKRFSRRKMRDGMLNTKNM. Position 49 is a pyrrolidone carboxylic acid (Gln-49). Intrachain disulfides connect Cys-50–Cys-65, Cys-57–Cys-68, and Cys-64–Cys-73.

Belongs to the conotoxin O1 superfamily. In terms of tissue distribution, expressed by the venom duct.

It is found in the secreted. This is Conotoxin ArMKLT2-0251 from Conus arenatus (Sand-dusted cone).